A 243-amino-acid chain; its full sequence is uncharacterized protein (243 aa).

This is an uncharacterized protein from Caenorhabditis elegans.